Reading from the N-terminus, the 382-residue chain is DnaJ homolog dnj-20 (382 aa).

The first 21 residues, Met-1–Cys-21, serve as a signal peptide directing secretion. One can recognise a J domain in the interval Asp-24 to Gly-89.

In Caenorhabditis briggsae, this protein is DnaJ homolog dnj-20.